The following is a 172-amino-acid chain: Myosin regulatory light chain RLC-A (172 aa).

Residues 1–16 (MSSKRAKTKTTKKRPQ) are compositionally biased toward basic residues. The disordered stretch occupies residues 1-20 (MSSKRAKTKTTKKRPQRATS). A Phosphothreonine; by MLCK modification is found at Thr-19. At Ser-20 the chain carries Phosphoserine; by MLCK. EF-hand domains lie at 29 to 64 (SQIQ…MGKN), 98 to 133 (DPED…MGDR), and 134 to 169 (FTDE…GAKD). 4 residues coordinate Ca(2+): Asp-42, Asn-44, Asp-46, and Asp-53.

As to quaternary structure, myosin is a hexamer of 2 heavy chains and 4 light chains. Post-translationally, phosphorylation increases the actin-activated myosin ATPase activity and thereby regulates the contractile activity.

Functionally, myosin regulatory subunit that plays an important role in regulation of both smooth muscle and nonmuscle cell contractile activity via its phosphorylation. Implicated in cytokinesis, receptor capping, and cell locomotion. This is Myosin regulatory light chain RLC-A (Rlc-a) from Rattus norvegicus (Rat).